A 175-amino-acid polypeptide reads, in one-letter code: Probable coatomer subunit zeta-A (175 aa).

The protein belongs to the adaptor complexes small subunit family. In terms of assembly, oligomeric complex that consists of at least the alpha, beta, beta', gamma, delta, epsilon and zeta subunits.

It is found in the cytoplasm. The protein resides in the golgi apparatus membrane. The protein localises to the cytoplasmic vesicle. Its subcellular location is the COPI-coated vesicle membrane. Functionally, the coatomer is a cytosolic protein complex that binds to dilysine motifs and reversibly associates with Golgi non-clathrin-coated vesicles, which further mediate biosynthetic protein transport from the ER, via the Golgi up to the trans Golgi network. Coatomer complex is required for budding from Golgi membranes, and is essential for the retrograde Golgi-to-ER transport of dilysine-tagged proteins. The zeta subunit may be involved in regulating the coat assembly and, hence, the rate of biosynthetic protein transport due to its association-dissociation properties with the coatomer complex. The sequence is that of Probable coatomer subunit zeta-A (copZa) from Dictyostelium discoideum (Social amoeba).